Here is a 209-residue protein sequence, read N- to C-terminus: NAD(P)H-quinone oxidoreductase subunit I (209 aa).

4Fe-4S ferredoxin-type domains follow at residues 55 to 84 (GRIH…VDWE) and 95 to 124 (KHYS…MTEE). Residues Cys-64, Cys-67, Cys-70, Cys-74, Cys-104, Cys-107, Cys-110, and Cys-114 each coordinate [4Fe-4S] cluster.

It belongs to the complex I 23 kDa subunit family. As to quaternary structure, NDH-1 is composed of at least 11 different subunits. It depends on [4Fe-4S] cluster as a cofactor.

It localises to the cellular thylakoid membrane. It catalyses the reaction a plastoquinone + NADH + (n+1) H(+)(in) = a plastoquinol + NAD(+) + n H(+)(out). The enzyme catalyses a plastoquinone + NADPH + (n+1) H(+)(in) = a plastoquinol + NADP(+) + n H(+)(out). NDH-1 shuttles electrons from an unknown electron donor, via FMN and iron-sulfur (Fe-S) centers, to quinones in the respiratory and/or the photosynthetic chain. The immediate electron acceptor for the enzyme in this species is believed to be plastoquinone. Couples the redox reaction to proton translocation, and thus conserves the redox energy in a proton gradient. In Trichodesmium erythraeum (strain IMS101), this protein is NAD(P)H-quinone oxidoreductase subunit I.